A 211-amino-acid polypeptide reads, in one-letter code: Glial cell line-derived neurotrophic factor (211 aa).

The N-terminal stretch at 1–19 (MKLWDVVAVCLVLLHTASA) is a signal peptide. The propeptide occupies 20–75 (FPLPAGKRLLEAPAEDHSLGHRRVPFALTSDSNMPEDYPDQFDDVMDFIQATIKRL). A disordered region spans residues 76–113 (KRSPDKQAAALPRRERNRQAAAASPENSRGKGRRGQRG). 3 cysteine pairs are disulfide-bonded: C118-C179, C145-C208, and C149-C210. N-linked (GlcNAc...) asparagine glycosylation is found at N126 and N162.

This sequence belongs to the TGF-beta family. GDNF subfamily. As to quaternary structure, homodimer; disulfide-linked. Interacts with GFRA1 coreceptor and RET: forms a 2:2:2 ternary complex composed of GDNF ligand, GFRA1 and RET receptor. Interacts (via propeptide) with SORL1 (via N-terminal ectodomain); this interaction affects GDNF-regulated, but not constitutive secretion. Also interacts with SORL1 in complex with GFRA1; this interaction leads to GDNF endocytosis and lysosomal degradation. Expressed in both the central nervous system (CNS) and in non-CNS tissues. Expressed in a highly dynamic pattern in the anterior neuroectoderm during the early stages of neurogenesis between 7.5 dpc and 10.5 dpc. Beginning at 10.5 dpc, expression begins in mesenchymal tissues of several organs including the digestive tract, kidney, testis, frontonasal mass, tooth primordium, tongue, mandible, whisker follicles, ear, eye, limb bud and in distinct regions of the brain. Also expressed in the heart, ileum, liver and muscle.

It localises to the secreted. Functionally, neurotrophic factor that enhances survival and morphological differentiation of dopaminergic neurons and increases their high-affinity dopamine uptake. Acts by binding to its coreceptor, GFRA1, leading to autophosphorylation and activation of the RET receptor. Involved in the development of the neural crest. The sequence is that of Glial cell line-derived neurotrophic factor (Gdnf) from Mus musculus (Mouse).